Consider the following 308-residue polypeptide: UPF0282 protein SSO3251 (308 aa).

Belongs to the UPF0282 family.

In Saccharolobus solfataricus (strain ATCC 35092 / DSM 1617 / JCM 11322 / P2) (Sulfolobus solfataricus), this protein is UPF0282 protein SSO3251.